The chain runs to 203 residues: Short chain dehydrogenase/reductase dpmpH (203 aa).

Residues Asp-23, Tyr-77, and Lys-81 each coordinate NADP(+). Residue Tyr-77 is the Proton acceptor of the active site. Lys-81 acts as the Lowers pKa of active site Tyr in catalysis.

This sequence belongs to the short-chain dehydrogenases/reductases (SDR) family.

It functions in the pathway secondary metabolite biosynthesis; terpenoid biosynthesis. Functionally, short chain dehydrogenase/reductase; part of the gene cluster that mediates the biosynthesis of diterpenoid pyrones. The first step of the pathway is the synthesis of the alpha-pyrone moiety by the polyketide synthase dpmpA via condensation of one acetyl-CoA starter unit with 3 malonyl-CoA units and 2 methylations. The alpha-pyrone is then combined with geranylgeranyl pyrophosphate (GGPP) formed by the GGPP synthase dpmpD through the action of the prenyltransferase dpmpC to yield a linear alpha-pyrone diterpenoid. Subsequent steps in the diterpenoid pyrone biosynthetic pathway involve the decalin core formation, which is initiated by the epoxidation of the C10-C11 olefin by the FAD-dependent oxidoreductase dpmpE, and is followed by a cyclization cascade catalyzed by the terpene cyclase dpmpB. The short chain dehydrogenase/reductase dpmpG then oxidizes the 8S hydroxy group to a ketone and the short chain dehydrogenase/reductase dpmpH reduces the ketone to the 8R hydroxy group to yield higginsianin B. Higginsianin B is further methylated by the methyltransferase dpmpI to produce the intermediate named FDDP B. The cytochrome P450 monooxygenase dpmpJ then oxidizes the C-26 methyl to primary alcohol, producing the final diterpenoid pyrone with a C-26 primary alcohol on the gamma-pyrone moiety named FDDP C. This Macrophomina phaseolina (strain MS6) (Charcoal rot fungus) protein is Short chain dehydrogenase/reductase dpmpH.